Reading from the N-terminus, the 219-residue chain is Tegument protein UL14 (219 aa).

Residues A161–E219 are disordered. Residues P177 to G200 are compositionally biased toward pro residues.

This sequence belongs to the alphaherpesvirinae HHV-1 UL14 protein family. As to quaternary structure, interacts with UL51. In terms of processing, phosphorylated.

It localises to the virion tegument. Its subcellular location is the host cytoplasm. The protein resides in the host nucleus. Its function is as follows. Contributes to the nuclear transport of the viral transcriptional activator VP16 during the early phase of infection. Therefore, participates indirectly in the regulation of the immediate-early gene expression. Additionally, seems to be important for efficient nuclear targeting of capsids. The UL51-UL14 complex regulates final viral envelopment for efficient viral replication. This Human herpesvirus 1 (strain 17) (HHV-1) protein is Tegument protein UL14.